The following is a 464-amino-acid chain: Juvenile hormone epoxide hydrolase 1 (464 aa).

A helical membrane pass occupies residues 7 to 27 (MLIFAAIAGIAVLYYQITKEL). The active-site Nucleophile is the Asp-224. Tyr-370 acts as the Proton donor in catalysis. Residue His-427 is the Proton acceptor of the active site.

It belongs to the peptidase S33 family. Developing oocytes, fat body and midgut epithelium of adults.

The protein localises to the microsome membrane. Its subcellular location is the endoplasmic reticulum membrane. The catalysed reaction is cis-stilbene oxide + H2O = (1R,2R)-hydrobenzoin. It carries out the reaction 1-(4-methoxyphenyl)-N-methyl-N-[(3-methyloxetan-3-yl)methyl]methanamine + H2O = 2-{[(4-methoxybenzyl)(methyl)amino]methyl}-2-methylpropane-1,3-diol. In terms of biological role, catalyzes juvenile hormone hydrolysis. In Ctenocephalides felis (Cat flea), this protein is Juvenile hormone epoxide hydrolase 1.